Consider the following 150-residue polypeptide: Protein Smg homolog (150 aa).

This sequence belongs to the Smg family.

The polypeptide is Protein Smg homolog (Methylibium petroleiphilum (strain ATCC BAA-1232 / LMG 22953 / PM1)).